Here is a 495-residue protein sequence, read N- to C-terminus: Cysteine--tRNA ligase (495 aa).

Cys-29 is a binding site for Zn(2+). A 'HIGH' region motif is present at residues 31 to 41 (PTVYDYGHIGN). Positions 211, 236, and 240 each coordinate Zn(2+). A 'KMSKS' region motif is present at residues 268-272 (KMSKS). Lys-271 serves as a coordination point for ATP.

This sequence belongs to the class-I aminoacyl-tRNA synthetase family. As to quaternary structure, monomer. It depends on Zn(2+) as a cofactor.

The protein resides in the cytoplasm. The catalysed reaction is tRNA(Cys) + L-cysteine + ATP = L-cysteinyl-tRNA(Cys) + AMP + diphosphate. This chain is Cysteine--tRNA ligase, found in Koribacter versatilis (strain Ellin345).